We begin with the raw amino-acid sequence, 316 residues long: Ribosomal RNA small subunit methyltransferase H (316 aa).

S-adenosyl-L-methionine-binding positions include 39-41 (GGH), aspartate 56, phenylalanine 82, aspartate 103, and glutamine 110.

This sequence belongs to the methyltransferase superfamily. RsmH family.

The protein resides in the cytoplasm. The catalysed reaction is cytidine(1402) in 16S rRNA + S-adenosyl-L-methionine = N(4)-methylcytidine(1402) in 16S rRNA + S-adenosyl-L-homocysteine + H(+). Its function is as follows. Specifically methylates the N4 position of cytidine in position 1402 (C1402) of 16S rRNA. The polypeptide is Ribosomal RNA small subunit methyltransferase H (Methylacidiphilum infernorum (isolate V4) (Methylokorus infernorum (strain V4))).